The chain runs to 231 residues: MTLPLVEARSLSKSFGEGELASQVLKRLSFDINAGERVALVGPSGSGKSTLLAVLGTLLGATSGDLRILGQPMIGLPEAELARFRNRNLGFVFQFHHLLPDFTALENVLFPAAAGKGRETRLMRERARALLVRVGLEDRVDYGARKLSGGQKQRVALARALINRPALVLADEPTGNLDSGPAEQVMNLLGEINAEDGTTFLISTHDAAVAARCTRRMELLDGRLVGQDPAD.

An ABC transporter domain is found at 6 to 230 (VEARSLSKSF…DGRLVGQDPA (225 aa)). ATP is bound at residue 42–49 (GPSGSGKS).

This sequence belongs to the ABC transporter superfamily. Lipoprotein translocase (TC 3.A.1.125) family. As to quaternary structure, the complex is composed of two ATP-binding proteins (LolD) and two transmembrane proteins (LolC and LolE).

The protein localises to the cell inner membrane. In terms of biological role, part of the ABC transporter complex LolCDE involved in the translocation of mature outer membrane-directed lipoproteins, from the inner membrane to the periplasmic chaperone, LolA. Responsible for the formation of the LolA-lipoprotein complex in an ATP-dependent manner. This is Lipoprotein-releasing system ATP-binding protein LolD 2 from Rhodospirillum rubrum (strain ATCC 11170 / ATH 1.1.1 / DSM 467 / LMG 4362 / NCIMB 8255 / S1).